The chain runs to 397 residues: N-acetyllactosaminide beta-1,3-N-acetylglucosaminyltransferase 2 (397 aa).

Residues 1 to 7 (MSVGRRR) are Cytoplasmic-facing. Residues 8 to 28 (IKLLGILMMANVFIYFIMEVS) traverse the membrane as a helical; Signal-anchor for type II membrane protein segment. Residues 29-397 (KSSSQEKNGK…SQLQSAHLKC (369 aa)) are Lumenal-facing. N-linked (GlcNAc...) asparagine glycosylation is found at Asn79, Asn89, Asn127, Asn173, and Asn219.

It belongs to the glycosyltransferase 31 family. Interacts with B3GNT8; this interaction greatly increases B3GNT2 catalytic activity, independently of B3GNT8 enzymatic activity. Mn(2+) is required as a cofactor. As to expression, ubiquitous.

Its subcellular location is the golgi apparatus membrane. It carries out the reaction a beta-D-galactosyl-(1-&gt;4)-N-acetyl-beta-D-glucosaminyl derivative + UDP-N-acetyl-alpha-D-glucosamine = an N-acetyl-beta-D-glucosaminyl-(1-&gt;3)-beta-D-galactosyl-(1-&gt;4)-N-acetyl-beta-D-glucosaminyl derivative + UDP + H(+). The protein operates within protein modification; protein glycosylation. Beta-1,3-N-acetylglucosaminyltransferase involved in the synthesis of poly-N-acetyllactosamine. Catalyzes the initiation and elongation of poly-N-acetyllactosamine chains. Shows a marked preference for Gal(beta1-4)Glc(NAc)-based acceptors. Probably constitutes the main polylactosamine synthase. This is N-acetyllactosaminide beta-1,3-N-acetylglucosaminyltransferase 2 (B3GNT2) from Homo sapiens (Human).